An 80-amino-acid chain; its full sequence is Exodeoxyribonuclease 7 small subunit (80 aa).

Belongs to the XseB family. Heterooligomer composed of large and small subunits.

It is found in the cytoplasm. The enzyme catalyses Exonucleolytic cleavage in either 5'- to 3'- or 3'- to 5'-direction to yield nucleoside 5'-phosphates.. Bidirectionally degrades single-stranded DNA into large acid-insoluble oligonucleotides, which are then degraded further into small acid-soluble oligonucleotides. This Escherichia coli (strain SE11) protein is Exodeoxyribonuclease 7 small subunit.